The chain runs to 252 residues: Zinc import ATP-binding protein ZnuC (252 aa).

The ABC transporter domain occupies Val-5 to Arg-220. Gly-37–Ser-44 lines the ATP pocket.

It belongs to the ABC transporter superfamily. Zinc importer (TC 3.A.1.15.5) family. In terms of assembly, the complex is composed of two ATP-binding proteins (ZnuC), two transmembrane proteins (ZnuB) and a solute-binding protein (ZnuA).

Its subcellular location is the cell inner membrane. It carries out the reaction Zn(2+)(out) + ATP(in) + H2O(in) = Zn(2+)(in) + ADP(in) + phosphate(in) + H(+)(in). Part of the ABC transporter complex ZnuABC involved in zinc import. Responsible for energy coupling to the transport system. This chain is Zinc import ATP-binding protein ZnuC, found in Yersinia enterocolitica serotype O:8 / biotype 1B (strain NCTC 13174 / 8081).